A 261-amino-acid polypeptide reads, in one-letter code: Cytochrome c oxidase subunit 3 (261 aa).

Residues 1–15 (MAHQAHAYHMVDPSP) lie on the Mitochondrial matrix side of the membrane. A helical membrane pass occupies residues 16–34 (WPITGATAALLVTSGLAAW). The Mitochondrial intermembrane segment spans residues 35–40 (FHFNSM). Residues 41 to 66 (ILILMGLTLLLLTMYQWWRDIIREST) traverse the membrane as a helical segment. Residues 67-72 (FQGHHT) are Mitochondrial matrix-facing. Residues 73 to 105 (LPVQKSLRYGMILFITSEVFFFLGFFWAFYHSS) traverse the membrane as a helical segment. The Mitochondrial intermembrane segment spans residues 106–128 (LAPTPELGGLWPPTGITPLDPFE). The chain crosses the membrane as a helical span at residues 129-152 (VPLLNTAVLLASGITVTWAHHSLM). At 153–155 (EGQ) the chain is on the mitochondrial matrix side. A helical membrane pass occupies residues 156–183 (RKEAIQSLFITVLLGLYFTALQATEYYE). Topologically, residues 184–190 (SPFTIAD) are mitochondrial intermembrane. A helical membrane pass occupies residues 191–223 (GAYGSTFFVATGFHGLHVIIGSTFLIVCLVRQT). Over 224-232 (QYHFTSNHH) the chain is Mitochondrial matrix. Residues 233 to 256 (FGFEAAAWYWHFVDVVWLFLYVSI) traverse the membrane as a helical segment. At 257-261 (YWWGS) the chain is on the mitochondrial intermembrane side.

The protein belongs to the cytochrome c oxidase subunit 3 family. In terms of assembly, component of the cytochrome c oxidase (complex IV, CIV), a multisubunit enzyme composed of 14 subunits. The complex is composed of a catalytic core of 3 subunits MT-CO1, MT-CO2 and MT-CO3, encoded in the mitochondrial DNA, and 11 supernumerary subunits COX4I, COX5A, COX5B, COX6A, COX6B, COX6C, COX7A, COX7B, COX7C, COX8 and NDUFA4, which are encoded in the nuclear genome. The complex exists as a monomer or a dimer and forms supercomplexes (SCs) in the inner mitochondrial membrane with NADH-ubiquinone oxidoreductase (complex I, CI) and ubiquinol-cytochrome c oxidoreductase (cytochrome b-c1 complex, complex III, CIII), resulting in different assemblies (supercomplex SCI(1)III(2)IV(1) and megacomplex MCI(2)III(2)IV(2)).

Its subcellular location is the mitochondrion inner membrane. The enzyme catalyses 4 Fe(II)-[cytochrome c] + O2 + 8 H(+)(in) = 4 Fe(III)-[cytochrome c] + 2 H2O + 4 H(+)(out). In terms of biological role, component of the cytochrome c oxidase, the last enzyme in the mitochondrial electron transport chain which drives oxidative phosphorylation. The respiratory chain contains 3 multisubunit complexes succinate dehydrogenase (complex II, CII), ubiquinol-cytochrome c oxidoreductase (cytochrome b-c1 complex, complex III, CIII) and cytochrome c oxidase (complex IV, CIV), that cooperate to transfer electrons derived from NADH and succinate to molecular oxygen, creating an electrochemical gradient over the inner membrane that drives transmembrane transport and the ATP synthase. Cytochrome c oxidase is the component of the respiratory chain that catalyzes the reduction of oxygen to water. Electrons originating from reduced cytochrome c in the intermembrane space (IMS) are transferred via the dinuclear copper A center (CU(A)) of subunit 2 and heme A of subunit 1 to the active site in subunit 1, a binuclear center (BNC) formed by heme A3 and copper B (CU(B)). The BNC reduces molecular oxygen to 2 water molecules using 4 electrons from cytochrome c in the IMS and 4 protons from the mitochondrial matrix. This is Cytochrome c oxidase subunit 3 (MT-CO3) from Latimeria chalumnae (Coelacanth).